Consider the following 515-residue polypeptide: 1-pyrroline-5-carboxylate dehydrogenase (515 aa).

Active-site residues include glutamate 286 and cysteine 320.

Belongs to the aldehyde dehydrogenase family. RocA subfamily.

It catalyses the reaction L-glutamate 5-semialdehyde + NAD(+) + H2O = L-glutamate + NADH + 2 H(+). It participates in amino-acid degradation; L-proline degradation into L-glutamate; L-glutamate from L-proline: step 2/2. The protein is 1-pyrroline-5-carboxylate dehydrogenase of Anoxybacillus flavithermus (strain DSM 21510 / WK1).